Reading from the N-terminus, the 430-residue chain is uncharacterized protein (430 aa).

The next 10 helical transmembrane spans lie at phenylalanine 13–phenylalanine 33, leucine 47–alanine 67, valine 88–isoleucine 108, glycine 138–methionine 158, leucine 228–phenylalanine 248, serine 264–isoleucine 284, isoleucine 296–valine 316, alanine 319–methionine 339, phenylalanine 358–valine 378, and tyrosine 383–leucine 403.

The protein belongs to the major facilitator superfamily.

It localises to the cell membrane. This is an uncharacterized protein from Bacillus subtilis (strain 168).